Consider the following 632-residue polypeptide: MGKAIGIDLGTTNSVVAVVVGGEPVVIPNQEGQRTTPSVVAFTDKGERLVGQVAKRQAITNPENTIFSIKRLMGRKYNSQEVQEAKKRLPYKIVEAPNGDAHVEIMGKRYSPPEISAMILQKLKQAAEDYLGEPVTEAVITVPAYFDDSQRQATKDAGRIAGLNVLRIINEPTAAALAYGLDKKKEEKIAVYDLGGGTFDISILEIGEGVIEVKATNGDTYLGGDDFDIRVMDWLIEEFKKQEGIDLRKDRMALQRLKEAAERAKIELSSAMETEINLPFITADASGPKHLLMKLTRAKLEQLVDDLIQKSLEPCKKALSDAGLSQSQIDEVILVGGQTRTPKVQKVVQDFFGKEPHKGVNPDEVVAVGAAIQAAILKGEVKEVLLLDVTPLSLGIETLGGVFTKIIERNTTIPTKKSQIFTTAADNQTAVTIKVYQGEREMAADNKLLGVFELVGIPPAPRGIPQIEVTFDIDANGILHVSAKDLATGKEQSIRITASSGLSEEEIKKMIREAEAHAEEDRRKKQIAEARNEADNMIYTVEKTLRDMGDRISEDERKRIEEAIEKCRRIKDTSNDVNEIKAAVEELAKASHRVAEELYKKAGASQQGAGSTTQSKKEEDVIEAEVEDKDNK.

The residue at position 198 (T198) is a Phosphothreonine; by autocatalysis. The tract at residues 599–632 (YKKAGASQQGAGSTTQSKKEEDVIEAEVEDKDNK) is disordered. Residues 604-614 (ASQQGAGSTTQ) show a composition bias toward polar residues. Residues 620 to 632 (DVIEAEVEDKDNK) are compositionally biased toward acidic residues.

This sequence belongs to the heat shock protein 70 family.

Functionally, acts as a chaperone. This is Chaperone protein DnaK from Thermodesulfovibrio yellowstonii (strain ATCC 51303 / DSM 11347 / YP87).